Consider the following 175-residue polypeptide: ATP synthase subunit b (175 aa).

A helical membrane pass occupies residues 23 to 43 (TGITFLVLLFVLGKFAWGPIV).

Belongs to the ATPase B chain family. F-type ATPases have 2 components, F(1) - the catalytic core - and F(0) - the membrane proton channel. F(1) has five subunits: alpha(3), beta(3), gamma(1), delta(1), epsilon(1). F(0) has three main subunits: a(1), b(2) and c(10-14). The alpha and beta chains form an alternating ring which encloses part of the gamma chain. F(1) is attached to F(0) by a central stalk formed by the gamma and epsilon chains, while a peripheral stalk is formed by the delta and b chains.

The protein localises to the cell inner membrane. Functionally, f(1)F(0) ATP synthase produces ATP from ADP in the presence of a proton or sodium gradient. F-type ATPases consist of two structural domains, F(1) containing the extramembraneous catalytic core and F(0) containing the membrane proton channel, linked together by a central stalk and a peripheral stalk. During catalysis, ATP synthesis in the catalytic domain of F(1) is coupled via a rotary mechanism of the central stalk subunits to proton translocation. In terms of biological role, component of the F(0) channel, it forms part of the peripheral stalk, linking F(1) to F(0). The chain is ATP synthase subunit b from Anaeromyxobacter sp. (strain Fw109-5).